Consider the following 821-residue polypeptide: Probable E3 ubiquitin-protein ligase hulA (821 aa).

The 112-residue stretch at 1–112 folds into the C2 domain; sequence MGSNLPAQPN…QMGGDEMLTR (112 aa). Disordered regions lie at residues 140 to 240 and 255 to 359; these read PNQA…WERR and RTTT…YFVD. Composition is skewed to polar residues over residues 151-173, 181-201, 217-228, and 255-272; these read AQSSTSSGLVPQVSSASHPSVSP, AASNVSLHPQRVPSTTRPTST, QGSRTNLSSFED, and RTTTWTRPSSNYNEQTQR. The 34-residue stretch at 231–264 folds into the WW 1 domain; it reads GRLPAGWERREDNLGRTYYVDHNTRTTTWTRPSS. Residues 281 to 296 show a composition bias toward basic and acidic residues; it reads LERRAHQSRMLPEDRT. Residues 297 to 306 are compositionally biased toward polar residues; the sequence is GANSPNLQES. Over residues 311 to 339 the composition is skewed to low complexity; that stretch reads PQQAHTPPAGGSASAVSMMATGATTAGTG. WW domains lie at 339-372 and 399-432; these read GELPPGWEQRTTPEGRPYFVDHNTRTTTWVDPRR and GPLPSGWEMRLTNTARVYFVDHNTKTTTWDDPRL. Residues 488-821 enclose the HECT domain; the sequence is SASDLKKRLM…VEETLGFGQE (334 aa). The active-site Glycyl thioester intermediate is C789.

Belongs to the RSP5/NEDD4 family. In terms of assembly, interacts with creD.

It is found in the cytoplasm. It carries out the reaction S-ubiquitinyl-[E2 ubiquitin-conjugating enzyme]-L-cysteine + [acceptor protein]-L-lysine = [E2 ubiquitin-conjugating enzyme]-L-cysteine + N(6)-ubiquitinyl-[acceptor protein]-L-lysine.. The protein operates within protein modification; protein ubiquitination. In terms of biological role, E3 ubiquitin-protein ligase which accepts ubiquitin from an E2 ubiquitin-conjugating enzyme in the form of a thioester and then directly transfers the ubiquitin to targeted substrates. Probably involved in the regulatory network controlling carbon source utilization. The sequence is that of Probable E3 ubiquitin-protein ligase hulA (hulA) from Aspergillus niger (strain ATCC MYA-4892 / CBS 513.88 / FGSC A1513).